Consider the following 235-residue polypeptide: tRNA (guanine-N(1)-)-methyltransferase (235 aa).

S-adenosyl-L-methionine is bound by residues G114 and 134-139 (IGDYIL).

It belongs to the RNA methyltransferase TrmD family. As to quaternary structure, homodimer.

It localises to the cytoplasm. The catalysed reaction is guanosine(37) in tRNA + S-adenosyl-L-methionine = N(1)-methylguanosine(37) in tRNA + S-adenosyl-L-homocysteine + H(+). Functionally, specifically methylates guanosine-37 in various tRNAs. The sequence is that of tRNA (guanine-N(1)-)-methyltransferase from Ehrlichia ruminantium (strain Gardel).